A 443-amino-acid chain; its full sequence is D-aminoacyl-tRNA deacylase (443 aa).

This sequence belongs to the DtdA deacylase family. As to quaternary structure, monomer. Requires Zn(2+) as cofactor.

It carries out the reaction a D-aminoacyl-tRNA + H2O = a tRNA + a D-alpha-amino acid + H(+). The enzyme catalyses glycyl-tRNA(Ala) + H2O = tRNA(Ala) + glycine + H(+). Functionally, D-aminoacyl-tRNA deacylase with broad substrate specificity. By recycling D-aminoacyl-tRNA to D-amino acids and free tRNA molecules, this enzyme counteracts the toxicity associated with the formation of D-aminoacyl-tRNA entities in vivo. This Methanocorpusculum labreanum (strain ATCC 43576 / DSM 4855 / Z) protein is D-aminoacyl-tRNA deacylase.